Consider the following 448-residue polypeptide: MAFVNTLLRTIRCSAVHTLVQEGRSLSLLKASHQLTQSRKIMLSNHVRKEEAKSEPNETLDLEEWKSILKSDIGNAEMVKTETQEDSSLNEMQELVEMWRLAGRAVPQSITTEQLQVLMELPTKTARKKYLKYLSVREVMKTNRKEKKKELKESKSKIESLDQLETKEDTPEKKNTFLLHVWDKSIDTMQRWKCVQAMKFGQPLVFDMVYEKNMSRYELENTVCQLMESEGWNRRSTDPFHIYFCSLQPYSMYHKELVKRYIGAWDNVFVTATDKSHVEMFPKEQLVYLTADSPNELKHFDHTKIYIIGSLVDRCQQTGLSLANAKRLNLATARLPLDRYLKWDVGAKNLTLDQMIRILLCLKDTGDWKKALSFVPNRKHDGFAEPAASKKRNIKNDGGMEYAASTKRNLQKNSKMYKFGASKSFIKPERTDDTSIRSTRKRWWEEEN.

The transit peptide at M1–R48 directs the protein to the mitochondrion. A coiled-coil region spans residues R137–E165. Positions R144–K167 are disordered. In terms of domain architecture, SAM-dependent MTase TRM10-type spans Q190–G382. The tract at residues E429–N448 is disordered.

Belongs to the class IV-like SAM-binding methyltransferase superfamily. TRM10 family. In terms of assembly, component of mitochondrial ribonuclease P. Interacts with HSD17B10/MRPP2.

It is found in the mitochondrion matrix. The protein localises to the mitochondrion nucleoid. It carries out the reaction adenosine(9) in tRNA + S-adenosyl-L-methionine = N(1)-methyladenosine(9) in tRNA + S-adenosyl-L-homocysteine + H(+). The catalysed reaction is guanosine(9) in tRNA + S-adenosyl-L-methionine = N(1)-methylguanosine(9) in tRNA + S-adenosyl-L-homocysteine + H(+). It catalyses the reaction an adenosine in mRNA + S-adenosyl-L-methionine = an N(1)-methyladenosine in mRNA + S-adenosyl-L-homocysteine + H(+). Its function is as follows. Mitochondrial tRNA N(1)-methyltransferase involved in mitochondrial tRNA maturation. Component of mitochondrial ribonuclease P, which cleaves tRNA molecules in their 5'-ends. Together with hsd17b10/mrpp2, forms a subcomplex of the mitochondrial ribonuclease P, named MRPP1-MRPP2 subcomplex, which displays functions that are independent of the ribonuclease P activity. The MRPP1-MRPP2 subcomplex catalyzes the formation of N(1)-methylguanine and N(1)-methyladenine at position 9 (m1G9 and m1A9, respectively) in tRNAs; trmt10c/mrpp1 acting as the catalytic N(1)-methyltransferase subunit. The MRPP1-MRPP2 subcomplex also acts as a tRNA maturation platform: following 5'-end cleavage by the mitochondrial ribonuclease P complex, the MRPP1-MRPP2 subcomplex enhances the efficiency of 3'-processing catalyzed by ELAC2, retains the tRNA product after elac2 processing and presents the nascent tRNA to the mitochondrial CCA tRNA nucleotidyltransferase TRNT1 enzyme. In addition to tRNA N(1)-methyltransferase activity, trmt10c/mrpp1 also acts as a mRNA N(1)-methyltransferase by mediating methylation of adenosine residues at the N(1) position of MT-ND5 mRNA. This is tRNA methyltransferase 10 homolog C from Xenopus tropicalis (Western clawed frog).